Reading from the N-terminus, the 154-residue chain is 3-hydroxyacyl-[acyl-carrier-protein] dehydratase FabZ (154 aa).

Residue His59 is part of the active site.

It belongs to the thioester dehydratase family. FabZ subfamily.

It localises to the cytoplasm. The enzyme catalyses a (3R)-hydroxyacyl-[ACP] = a (2E)-enoyl-[ACP] + H2O. Involved in unsaturated fatty acids biosynthesis. Catalyzes the dehydration of short chain beta-hydroxyacyl-ACPs and long chain saturated and unsaturated beta-hydroxyacyl-ACPs. The polypeptide is 3-hydroxyacyl-[acyl-carrier-protein] dehydratase FabZ (Bartonella bacilliformis (strain ATCC 35685 / KC583 / Herrer 020/F12,63)).